Here is a 398-residue protein sequence, read N- to C-terminus: Na(+)/H(+) antiporter NhaA (398 aa).

11 helical membrane passes run 21–41 (LGGY…NSPL), 66–86 (VLHW…GLEI), 101–121 (IVLP…VYLL), 132–152 (GWAI…ALLG), 161–181 (IFLT…IAVF), 184–204 (AELN…LCVL), 216–236 (LLVG…ATLA), 274–294 (LLIV…GMGI), 305–325 (IALG…WLAI), 343–363 (GVAL…ALAF), and 374–394 (IGVL…LRVL).

The protein belongs to the NhaA Na(+)/H(+) (TC 2.A.33) antiporter family.

The protein localises to the cell inner membrane. It carries out the reaction Na(+)(in) + 2 H(+)(out) = Na(+)(out) + 2 H(+)(in). Na(+)/H(+) antiporter that extrudes sodium in exchange for external protons. The sequence is that of Na(+)/H(+) antiporter NhaA from Bordetella bronchiseptica (strain ATCC BAA-588 / NCTC 13252 / RB50) (Alcaligenes bronchisepticus).